Consider the following 136-residue polypeptide: Holo-[acyl-carrier-protein] synthase (136 aa).

Mg(2+) contacts are provided by Asp8 and Glu57.

The protein belongs to the P-Pant transferase superfamily. AcpS family. Mg(2+) serves as cofactor.

It is found in the cytoplasm. It catalyses the reaction apo-[ACP] + CoA = holo-[ACP] + adenosine 3',5'-bisphosphate + H(+). Functionally, transfers the 4'-phosphopantetheine moiety from coenzyme A to a Ser of acyl-carrier-protein. This chain is Holo-[acyl-carrier-protein] synthase, found in Methylorubrum extorquens (strain CM4 / NCIMB 13688) (Methylobacterium extorquens).